The following is a 625-amino-acid chain: Inactive glucose-6-phosphate 1-dehydrogenase 4, chloroplastic (625 aa).

A chloroplast-targeting transit peptide spans 1-49 (MSLSSCLLPFSQSATAPSSSVCSCHLAASFSNFPVSSRDYSFSRSGSLV). Residues 160–167 (GATGELAR) and Arg-194 each bind NADP(+). Cys-212 and Cys-220 are disulfide-bonded. Lys-297 serves as a coordination point for NADP(+). D-glucose 6-phosphate contacts are provided by residues Lys-297, 327–331 (HMLGR), Glu-365, and Asp-382. His-387 acts as the Proton acceptor in catalysis. Residues Arg-471, Arg-480, Arg-513, and Arg-606 each contribute to the NADP(+) site.

This sequence belongs to the glucose-6-phosphate dehydrogenase family. Forms homodimer. Interacts with G6PD1. Expressed in leaves, stems and buds.

The protein localises to the plastid. Its subcellular location is the chloroplast stroma. Functionally, seems to be a catalytically inactive enzyme. The chain is Inactive glucose-6-phosphate 1-dehydrogenase 4, chloroplastic from Arabidopsis thaliana (Mouse-ear cress).